Here is a 216-residue protein sequence, read N- to C-terminus: Probable GTP-binding protein EngB (216 aa).

In terms of domain architecture, EngB-type G spans 43–216 (DRLEVCFAGR…TLRSIITDLT (174 aa)). GTP is bound by residues 51 to 58 (GRSNVGKS), 78 to 82 (GRTQE), 96 to 99 (DLPG), 163 to 166 (TKAD), and 197 to 199 (TSS). The Mg(2+) site is built by S58 and T80.

This sequence belongs to the TRAFAC class TrmE-Era-EngA-EngB-Septin-like GTPase superfamily. EngB GTPase family. Mg(2+) is required as a cofactor.

Its function is as follows. Necessary for normal cell division and for the maintenance of normal septation. The polypeptide is Probable GTP-binding protein EngB (Roseobacter denitrificans (strain ATCC 33942 / OCh 114) (Erythrobacter sp. (strain OCh 114))).